The sequence spans 138 residues: Basic phospholipase A2 homolog 7 (138 aa).

The N-terminal stretch at 1–16 (MRTLWLMAVLLVGVEG) is a signal peptide. 6 disulfides stabilise this stretch: cysteine 42-cysteine 131, cysteine 44-cysteine 60, cysteine 59-cysteine 111, cysteine 65-cysteine 138, cysteine 66-cysteine 104, and cysteine 91-cysteine 102. The important for membrane-damaging activities in eukaryotes and bacteria; heparin-binding stretch occupies residues 121 to 133 (KKKKINLKLFCKK).

It belongs to the phospholipase A2 family. Group II subfamily. K49 sub-subfamily. Expressed by the venom gland.

The protein localises to the secreted. Its function is as follows. Snake venom phospholipase A2 homolog that lacks enzymatic activity. Is myotoxic and displays edema-inducing activities. A model of myotoxic mechanism has been proposed: an apo Lys49-PLA2 is activated by the entrance of a hydrophobic molecule (e.g. fatty acid) at the hydrophobic channel of the protein leading to a reorientation of a monomer. This reorientation causes a transition between 'inactive' to 'active' states, causing alignment of C-terminal and membrane-docking sites (MDoS) side-by-side and putting the membrane-disruption sites (MDiS) in the same plane, exposed to solvent and in a symmetric position for both monomers. The MDoS region stabilizes the toxin on membrane by the interaction of charged residues with phospholipid head groups. Subsequently, the MDiS region destabilizes the membrane with penetration of hydrophobic residues. This insertion causes a disorganization of the membrane, allowing an uncontrolled influx of ions (i.e. calcium and sodium), and eventually triggering irreversible intracellular alterations and cell death. This Craspedocephalus gramineus (Bamboo pit viper) protein is Basic phospholipase A2 homolog 7.